The following is a 337-amino-acid chain: Regulator of RpoS (337 aa).

In terms of domain architecture, Response regulatory spans Q9 to C123. D58 bears the 4-aspartylphosphate mark.

The protein belongs to the RssB family. Binds to RpoS. Phosphorylated. Phosphorylation stimulates the interaction with RpoS and, therefore, the proteolysis of RpoS.

In terms of biological role, regulates the turnover of the sigma S factor (RpoS) by promoting its proteolysis in exponentially growing cells. Acts by binding and delivering RpoS to the ClpXP protease. RssB is not co-degraded with RpoS, but is released from the complex and can initiate a new cycle of RpoS recognition and degradation. The protein is Regulator of RpoS of Shigella flexneri.